The chain runs to 499 residues: Probable dipeptidase B (499 aa).

C26 is an active-site residue.

Belongs to the peptidase C69 family.

The enzyme catalyses an L-aminoacyl-L-amino acid + H2O = 2 an L-alpha-amino acid. The sequence is that of Probable dipeptidase B (pepDB) from Streptococcus pyogenes serotype M3 (strain ATCC BAA-595 / MGAS315).